The primary structure comprises 461 residues: Asparagine--tRNA ligase (461 aa).

Belongs to the class-II aminoacyl-tRNA synthetase family. Homodimer.

The protein localises to the cytoplasm. It catalyses the reaction tRNA(Asn) + L-asparagine + ATP = L-asparaginyl-tRNA(Asn) + AMP + diphosphate + H(+). This Nitratidesulfovibrio vulgaris (strain ATCC 29579 / DSM 644 / CCUG 34227 / NCIMB 8303 / VKM B-1760 / Hildenborough) (Desulfovibrio vulgaris) protein is Asparagine--tRNA ligase.